The chain runs to 155 residues: Ribosome maturation factor RimP (155 aa).

Belongs to the RimP family.

It localises to the cytoplasm. Functionally, required for maturation of 30S ribosomal subunits. The protein is Ribosome maturation factor RimP of Listeria monocytogenes serovar 1/2a (strain ATCC BAA-679 / EGD-e).